Here is a 2540-residue protein sequence, read N- to C-terminus: Probable JmjC domain-containing histone demethylation protein 2C (2540 aa).

A compositionally biased stretch (polar residues) spans 278 to 309 (TRAQANSPRPAMNSQAAVPKQNTHQQQQQRSI). The disordered stretch occupies residues 278 to 478 (TRAQANSPRP…TVSDHNSNDL (201 aa)). Residues serine 317 and serine 320 each carry the phosphoserine modification. Residues 323 to 342 (DEEKMKEEKYDYISRGENPK) show a composition bias toward basic and acidic residues. Basic residues predominate over residues 343–353 (GKNKHLMNKRR). Over residues 354-371 (KPEEDEKKLNMKRLRTDN) the composition is skewed to basic and acidic residues. Phosphoserine occurs at positions 373 and 376. The span at 373–382 (SDFSESSDSE) shows a compositional bias: low complexity. Basic and acidic residues-rich tracts occupy residues 383–403 (NSNK…ELKN), 410–427 (NGEE…EETL), and 438–452 (QEDK…RKSV). Positions 464-478 (SSEQSTVSDHNSNDL) are enriched in polar residues. Residues serine 475 and serine 501 each carry the phosphoserine modification. Threonine 505 is modified (phosphothreonine). Residues serine 601, serine 617, serine 638, serine 639, serine 641, serine 652, and serine 943 each carry the phosphoserine modification. Residues 631–656 (VDTHKIKSSPSPEVVKPKITHSPDSV) form a disordered region. Disordered regions lie at residues 1242–1263 (GKVQ…SQAN) and 1614–1692 (NRRK…NSNT). Basic residues predominate over residues 1643–1652 (KRQPKPTYKK). Residues 1653–1669 (KQNDLQKRKGEIEEDLK) show a composition bias toward basic and acidic residues. The C6-type zinc-finger motif lies at 1846 to 1871 (CDACEATLFNIHWVCQKCGFVVCLDC). The span at 1971–1991 (PESQQQNTPPKSEKNGGSSPE) shows a compositional bias: polar residues. Residues 1971-2064 (PESQQQNTPP…LVSQNNEQGS (94 aa)) form a disordered region. Position 1989 is a phosphoserine (serine 1989). Positions 2016 to 2043 (AEQKAREEKKENKELTLENQIKEEREQD) are enriched in basic and acidic residues. Polar residues predominate over residues 2045 to 2064 (SESPNGRTSPLVSQNNEQGS). An LXXLL motif motif is present at residues 2066-2070 (LRDLL). Glycyl lysine isopeptide (Lys-Gly) (interchain with G-Cter in SUMO2) cross-links involve residues lysine 2132 and lysine 2136. The region spanning 2274–2498 (MPARYEDLLK…ESFHLTQELR (225 aa)) is the JmjC domain. Fe cation is bound by residues histidine 2336, glutamate 2338, and histidine 2466.

This sequence belongs to the JHDM2 histone demethylase family. As to quaternary structure, interacts specifically with the ligand-binding domain of the thyroid receptor (TR). Requires the presence of thyroid hormone for its interaction. The cofactor is Fe(2+).

It is found in the nucleus. In terms of biological role, probable histone demethylase that specifically demethylates 'Lys-9' of histone H3, thereby playing a central role in histone code. Demethylation of Lys residue generates formaldehyde and succinate. May be involved in hormone-dependent transcriptional activation, by participating in recruitment to androgen-receptor target genes. The sequence is that of Probable JmjC domain-containing histone demethylation protein 2C (JMJD1C) from Homo sapiens (Human).